A 291-amino-acid polypeptide reads, in one-letter code: MGTPWRKRKGIAGPGLPHLSCALVLQPRAQVGTMSPAIALAFLPLVVTLLVRYRHYFRLLVRTVLLRSLRDCLSGLRIEERAFSYVLTHALPGDPGHILTTLDHWSSCCEYLSHMGPVKGQILMRLVEEKAPACVLELGTYCGYSTLLIARALPPGGRLLTVERDPRTAAVAEKLIRLAGFDEHMVELIVGSSEDVIPCLRTQYQLSRADLVLLAHRPRCYLRDLQLLEAHALLPAGATVLADHVLFPGAPRFLQYAKSCGRYRCRLHHTGLPDFPAIKDGIAQLTYAGPG.

The chain crosses the membrane as a helical span at residues 31–51 (VGTMSPAIALAFLPLVVTLLV). S-adenosyl-L-methionine is bound by residues glutamate 137, 139–140 (GT), serine 145, glutamate 163, and serine 193.

This sequence belongs to the class I-like SAM-binding methyltransferase superfamily. Cation-dependent O-methyltransferase family. In terms of assembly, interacts with LHFPL5, PCDH15, TMC1, TMC2 and TMIE. Interacts directly with TMC1. The interaction of TOMT with TMC1 and TMC2 is required for the transportation of TMC1/2 into the stereocilia of hair cells.

Its subcellular location is the membrane. The protein resides in the cytoplasm. The protein localises to the endoplasmic reticulum. It catalyses the reaction a catechol + S-adenosyl-L-methionine = a guaiacol + S-adenosyl-L-homocysteine + H(+). In terms of biological role, catalyzes the O-methylation, and thereby the inactivation, of catecholamine neurotransmitters and catechol hormones. Required for auditory function. Component of the cochlear hair cell's mechanotransduction (MET) machinery. Involved in the assembly of the asymmetric tip-link MET complex. Required for transportation of TMC1 and TMC2 proteins into the mechanically sensitive stereocilia of the hair cells. The function in MET is independent of the enzymatic activity. This Pan troglodytes (Chimpanzee) protein is Transmembrane O-methyltransferase.